Reading from the N-terminus, the 404-residue chain is 8-amino-7-oxononanoate synthase (404 aa).

Arg20 is a binding site for substrate. 116–117 (GY) contacts pyridoxal 5'-phosphate. His141 is a binding site for substrate. Pyridoxal 5'-phosphate is bound by residues Ser187, His215, and Thr243. Residue Lys246 is modified to N6-(pyridoxal phosphate)lysine. Thr366 contacts substrate.

The protein belongs to the class-II pyridoxal-phosphate-dependent aminotransferase family. BioF subfamily. As to quaternary structure, homodimer. Requires pyridoxal 5'-phosphate as cofactor.

It carries out the reaction 6-carboxyhexanoyl-[ACP] + L-alanine + H(+) = (8S)-8-amino-7-oxononanoate + holo-[ACP] + CO2. Its pathway is cofactor biosynthesis; biotin biosynthesis. In terms of biological role, catalyzes the decarboxylative condensation of pimeloyl-[acyl-carrier protein] and L-alanine to produce 8-amino-7-oxononanoate (AON), [acyl-carrier protein], and carbon dioxide. In Cupriavidus taiwanensis (strain DSM 17343 / BCRC 17206 / CCUG 44338 / CIP 107171 / LMG 19424 / R1) (Ralstonia taiwanensis (strain LMG 19424)), this protein is 8-amino-7-oxononanoate synthase.